A 594-amino-acid chain; its full sequence is UvrABC system protein C (594 aa).

Residues 13–99 enclose the GIY-YIG domain; it reads NSSGVYQYFD…IKQLKPKYNI (87 aa). The UVR domain maps to 205-240; it reads DRLIKELELKMERLSSNLRFEEALIYRDRIAKIQKI.

It belongs to the UvrC family. In terms of assembly, interacts with UvrB in an incision complex.

It localises to the cytoplasm. In terms of biological role, the UvrABC repair system catalyzes the recognition and processing of DNA lesions. UvrC both incises the 5' and 3' sides of the lesion. The N-terminal half is responsible for the 3' incision and the C-terminal half is responsible for the 5' incision. The polypeptide is UvrABC system protein C (Helicobacter pylori (strain G27)).